A 210-amino-acid polypeptide reads, in one-letter code: Na(+)-translocating NADH-quinone reductase subunit D (210 aa).

Transmembrane regions (helical) follow at residues 42 to 62 (FVMT…VSLI), 72 to 92 (IIVQ…ILKA), 103 to 123 (VFVG…AFAM), 131 to 151 (FIDG…VGFF), and 178 to 198 (NGLM…IWAI).

It belongs to the NqrDE/RnfAE family. Composed of six subunits; NqrA, NqrB, NqrC, NqrD, NqrE and NqrF.

The protein localises to the cell inner membrane. The catalysed reaction is a ubiquinone + n Na(+)(in) + NADH + H(+) = a ubiquinol + n Na(+)(out) + NAD(+). NQR complex catalyzes the reduction of ubiquinone-1 to ubiquinol by two successive reactions, coupled with the transport of Na(+) ions from the cytoplasm to the periplasm. NqrA to NqrE are probably involved in the second step, the conversion of ubisemiquinone to ubiquinol. In Vibrio cholerae serotype O1 (strain M66-2), this protein is Na(+)-translocating NADH-quinone reductase subunit D.